Consider the following 314-residue polypeptide: tRNA dimethylallyltransferase (314 aa).

12–19 (GPTASGKT) contacts ATP. 14-19 (TASGKT) provides a ligand contact to substrate. Interaction with substrate tRNA regions lie at residues 37–40 (DSAL), 161–165 (QRINR), 242–247 (RCVGYR), and 275–282 (KRQITWLR).

Belongs to the IPP transferase family. In terms of assembly, monomer. The cofactor is Mg(2+).

It carries out the reaction adenosine(37) in tRNA + dimethylallyl diphosphate = N(6)-dimethylallyladenosine(37) in tRNA + diphosphate. In terms of biological role, catalyzes the transfer of a dimethylallyl group onto the adenine at position 37 in tRNAs that read codons beginning with uridine, leading to the formation of N6-(dimethylallyl)adenosine (i(6)A). This is tRNA dimethylallyltransferase from Mannheimia succiniciproducens (strain KCTC 0769BP / MBEL55E).